A 392-amino-acid polypeptide reads, in one-letter code: PMA1 stabilization in the Golgi protein 1 (392 aa).

Positions 1 to 22 are cleaved as a signal peptide; that stretch reads MRFHDSILIFFSLASLYQHVHG. Thr34 and Thr35 each carry an O-linked (Man) threonine glycan. An O-linked (Man) serine glycan is attached at Ser36. O-linked (Man) threonine glycosylation occurs at Thr45. A glycan (O-linked (Man) serine) is linked at Ser49. O-linked (Man) threonine glycosylation is found at Thr55, Thr57, and Thr63. An O-linked (Man) serine glycan is attached at Ser65. Thr71 carries an O-linked (Man) threonine glycan. Ser80 carries an O-linked (Man) serine glycan. 2 O-linked (Man) threonine glycosylation sites follow: Thr89 and Thr99. Ser107 carries an O-linked (Man) serine glycan. O-linked (Man) threonine glycosylation is found at Thr108 and Thr112. Ser114 and Ser115 each carry an O-linked (Man) serine glycan. O-linked (Man) threonine glycosylation occurs at Thr117. Residues Ser119 and Ser148 are each glycosylated (O-linked (Man) serine). O-linked (Man) threonine glycosylation is present at Thr156. The O-linked (Man) serine glycan is linked to Ser171. O-linked (Man) threonine glycosylation is present at Thr176. Ser181 is a glycosylation site (O-linked (Man) serine). O-linked (Man) threonine glycosylation is found at Thr188, Thr192, Thr195, and Thr199. 2 O-linked (Man) serine glycosylation sites follow: Ser203 and Ser215. At 230–317 the chain is on the lumenal side; sequence DIPATFFSSE…DAGITNDQWY (88 aa). The chain crosses the membrane as a helical span at residues 318–338; that stretch reads YVALSIPTVVVVFFVFMYFFL. Residues 339 to 392 are Cytoplasmic-facing; it reads YVNGKNRDFTDVTRKALNKKRRVLGKFSEMKKFKNMKNHKYTELPSYKKTSKQN.

As to quaternary structure, interacts with EXP1. PSG1-N' interacts with ERAD-related proteins involved in PMA1 quality control including EPS1, CDC48, UBX2 and SSM4. PSG1-C' interacts with the TLG1/2 SNARE complex proteins TLG1, TLG2 and VTI1. The precursor protein is cleaved into two polypeptide chains, PSG1-N' and PSG1-C'. The cleavage is performed in the Golgi apparatus by Ca(+)-dependent serine protease KEX2 between Arg-229 and Asp-230. In terms of processing, PSG1-N' is highly O-mannosylated.

It localises to the golgi apparatus lumen. The protein resides in the cytoplasmic vesicle. Its subcellular location is the COPI-coated vesicle membrane. With EXP1, the specific cargo receptor protein for the plasma membrane ATPase PMA1, is involved in the transport and/or maturation of PMA1. EXP1 and PSG1 probably act sequentially to promote PMA1 sorting between the ER and the Golgi, with EXP1 promoting PMA1 export from the ER to the Golgi while PSG1 has a role in PMA1 maturation or quality control in the Golgi. PSG1 might also couple PMA1 sorting and maturation in the early secretory pathway with the glycosylation machinery. Its function is as follows. PSG1 is cleaved by KEX2 in two stable peptides, PSG1-N' and PSG1-C', the former supporting a role in maturation quality control, the latter having a role in modulating vesicular trafficking. The polypeptide is PMA1 stabilization in the Golgi protein 1 (Saccharomyces cerevisiae (strain ATCC 204508 / S288c) (Baker's yeast)).